The primary structure comprises 295 residues: Pyridoxal 5'-phosphate synthase subunit PdxS (295 aa).

Asp-25 provides a ligand contact to D-ribose 5-phosphate. Catalysis depends on Lys-82, which acts as the Schiff-base intermediate with D-ribose 5-phosphate. Position 154 (Gly-154) interacts with D-ribose 5-phosphate. Arg-166 serves as a coordination point for D-glyceraldehyde 3-phosphate. Residues Gly-215 and 236-237 each bind D-ribose 5-phosphate; that span reads GS.

The protein belongs to the PdxS/SNZ family. In terms of assembly, in the presence of PdxT, forms a dodecamer of heterodimers.

It catalyses the reaction aldehydo-D-ribose 5-phosphate + D-glyceraldehyde 3-phosphate + L-glutamine = pyridoxal 5'-phosphate + L-glutamate + phosphate + 3 H2O + H(+). The protein operates within cofactor biosynthesis; pyridoxal 5'-phosphate biosynthesis. Functionally, catalyzes the formation of pyridoxal 5'-phosphate from ribose 5-phosphate (RBP), glyceraldehyde 3-phosphate (G3P) and ammonia. The ammonia is provided by the PdxT subunit. Can also use ribulose 5-phosphate and dihydroxyacetone phosphate as substrates, resulting from enzyme-catalyzed isomerization of RBP and G3P, respectively. This is Pyridoxal 5'-phosphate synthase subunit PdxS from Bacillus cereus (strain 03BB102).